We begin with the raw amino-acid sequence, 382 residues long: Mannitol-1-phosphate 5-dehydrogenase (382 aa).

Alanine 3–glycine 14 lines the NAD(+) pocket.

It belongs to the mannitol dehydrogenase family.

The catalysed reaction is D-mannitol 1-phosphate + NAD(+) = beta-D-fructose 6-phosphate + NADH + H(+). The polypeptide is Mannitol-1-phosphate 5-dehydrogenase (Exiguobacterium sp. (strain ATCC BAA-1283 / AT1b)).